Here is a 198-residue protein sequence, read N- to C-terminus: Recombination protein RecR (198 aa).

The C4-type zinc-finger motif lies at 57 to 72 (CEKCNTFTEAQICEVC). In terms of domain architecture, Toprim spans 80–175 (TLLCVVETPA…AVTRLARGVP (96 aa)).

It belongs to the RecR family.

Functionally, may play a role in DNA repair. It seems to be involved in an RecBC-independent recombinational process of DNA repair. It may act with RecF and RecO. The chain is Recombination protein RecR from Paraburkholderia phytofirmans (strain DSM 17436 / LMG 22146 / PsJN) (Burkholderia phytofirmans).